A 336-amino-acid chain; its full sequence is Aspartate--ammonia ligase (336 aa).

The protein belongs to the class-II aminoacyl-tRNA synthetase family. AsnA subfamily.

The protein resides in the cytoplasm. It catalyses the reaction L-aspartate + NH4(+) + ATP = L-asparagine + AMP + diphosphate + H(+). It participates in amino-acid biosynthesis; L-asparagine biosynthesis; L-asparagine from L-aspartate (ammonia route): step 1/1. This Clostridium perfringens (strain SM101 / Type A) protein is Aspartate--ammonia ligase.